We begin with the raw amino-acid sequence, 107 residues long: UPF0473 protein llmg_0152 (107 aa).

It belongs to the UPF0473 family.

The chain is UPF0473 protein llmg_0152 from Lactococcus lactis subsp. cremoris (strain MG1363).